The sequence spans 1562 residues: Cell surface antigen I/II (1562 aa).

Positions 1 to 38 (MKVKKTYGFRKSKISKTLCGAVLGTVAAVSVAGQKVFA) are cleaved as a signal peptide. Positions 42–54 (TTTSDVDTKVVGT) are enriched in low complexity. Positions 42–91 (TTTSDVDTKVVGTQTGNPATNLPEAQGSASKEAEQSQNQAGETNGSIPVE) are disordered. Residues 60–551 (ATNLPEAQGS…SKAKYDQKIL (492 aa)) are helical. Positions 76–87 (QSQNQAGETNGS) are enriched in polar residues. 4 Ag I/II A repeats span residues 147–221 (KKTT…QKTN), 222–303 (AANQ…QEAN), 304–385 (AANE…KKAN), and 386–467 (AANE…QKDL). 2 disordered regions span residues 824-973 (VPKV…PTDP) and 1482-1509 (SNTV…RTST). The segment covering 943-958 (PTPPTPTPDQPEPNKP) has biased composition (pro residues). Residues 1500–1509 (QDPSSPRTST) show a composition bias toward low complexity. An LPXTG sorting signal motif is present at residues 1529–1533 (LPNTG). Residue Thr-1532 is modified to Pentaglycyl murein peptidoglycan amidated threonine. Positions 1533–1562 (GVTNNAYMPLLGIIGLVTSFSLLGLKAKKD) are cleaved as a propeptide — removed by sortase.

Belongs to the antigen I/II family. Detected as a 185 kDa cell surface protein, but also as 2 proteins in S.mutans culture supernatants of about 150 kDa (antigen I) and 50 kDa (antigen II); antigen II is only seen after proteolysis. Antigen I and II have the same N-terminus but different C-termini.

Its subcellular location is the secreted. The protein resides in the cell wall. Surface protein antigen implicated in dental caries. This is Cell surface antigen I/II from Streptococcus mutans serotype c (strain ATCC 700610 / UA159).